Reading from the N-terminus, the 126-residue chain is Aspartate 1-decarboxylase (126 aa).

Catalysis depends on serine 25, which acts as the Schiff-base intermediate with substrate; via pyruvic acid. Residue serine 25 is modified to Pyruvic acid (Ser). Threonine 57 is a substrate binding site. The Proton donor role is filled by tyrosine 58. Residue 73–75 (GAA) coordinates substrate.

This sequence belongs to the PanD family. Heterooctamer of four alpha and four beta subunits. Pyruvate serves as cofactor. Post-translationally, is synthesized initially as an inactive proenzyme, which is activated by self-cleavage at a specific serine bond to produce a beta-subunit with a hydroxyl group at its C-terminus and an alpha-subunit with a pyruvoyl group at its N-terminus.

It is found in the cytoplasm. It carries out the reaction L-aspartate + H(+) = beta-alanine + CO2. It participates in cofactor biosynthesis; (R)-pantothenate biosynthesis; beta-alanine from L-aspartate: step 1/1. In terms of biological role, catalyzes the pyruvoyl-dependent decarboxylation of aspartate to produce beta-alanine. The sequence is that of Aspartate 1-decarboxylase from Stutzerimonas stutzeri (strain A1501) (Pseudomonas stutzeri).